The chain runs to 196 residues: Carnitine operon protein CaiE (196 aa).

A disordered region spans residues 173 to 196; sequence TQPLRQMEENRPRLQGTTDVTPKR. A compositionally biased stretch (polar residues) spans 187–196; sequence QGTTDVTPKR.

Belongs to the transferase hexapeptide repeat family.

It participates in amine and polyamine metabolism; carnitine metabolism. In terms of biological role, overproduction of CaiE stimulates the activity of CaiB and CaiD. In Escherichia coli O157:H7, this protein is Carnitine operon protein CaiE.